A 644-amino-acid chain; its full sequence is DNA mismatch repair protein MutL (644 aa).

The tract at residues 363 to 405 is disordered; sequence GTFNPFTDDKTNQHYTKAGSGSGSGYSSGSSSSSGSGSGSSYS. Positions 389–405 are enriched in low complexity; that stretch reads SSGSSSSSGSGSGSSYS.

Belongs to the DNA mismatch repair MutL/HexB family.

This protein is involved in the repair of mismatches in DNA. It is required for dam-dependent methyl-directed DNA mismatch repair. May act as a 'molecular matchmaker', a protein that promotes the formation of a stable complex between two or more DNA-binding proteins in an ATP-dependent manner without itself being part of a final effector complex. The polypeptide is DNA mismatch repair protein MutL (Flavobacterium johnsoniae (strain ATCC 17061 / DSM 2064 / JCM 8514 / BCRC 14874 / CCUG 350202 / NBRC 14942 / NCIMB 11054 / UW101) (Cytophaga johnsonae)).